An 804-amino-acid chain; its full sequence is Putative mRNA-capping enzyme P5 (804 aa).

The protein belongs to the phytoreovirus protein P5 family.

It is found in the virion. The protein resides in the host cytoplasm. It catalyses the reaction a 5'-end diphospho-ribonucleoside in mRNA + GTP + H(+) = a 5'-end (5'-triphosphoguanosine)-ribonucleoside in mRNA + diphosphate. Its pathway is mRNA processing; mRNA capping. In terms of biological role, enzyme involved in mRNA capping (Potential). Binds to GTP and might have guanylyltransferase activity. Together with the RNA-directed RNA polymerase P1 and protein P7, forms an transcriptional complex positioned near the channels situated at each of the five-fold vertices of the core. The sequence is that of Putative mRNA-capping enzyme P5 from Catharanthus roseus (Madagascar periwinkle).